A 339-amino-acid chain; its full sequence is Anthranilate phosphoribosyltransferase (339 aa).

Residues Gly79, 82–83, Ser87, 89–92, 107–115, and Ser119 contribute to the 5-phospho-alpha-D-ribose 1-diphosphate site; these read GD, NIST, and KHGNRSISS. Residue Gly79 participates in anthranilate binding. Mg(2+) is bound at residue Ser91. Position 110 (Asn110) interacts with anthranilate. Residue Arg165 participates in anthranilate binding. Mg(2+) is bound by residues Asp224 and Glu225.

Belongs to the anthranilate phosphoribosyltransferase family. Homodimer. Requires Mg(2+) as cofactor.

It catalyses the reaction N-(5-phospho-beta-D-ribosyl)anthranilate + diphosphate = 5-phospho-alpha-D-ribose 1-diphosphate + anthranilate. Its pathway is amino-acid biosynthesis; L-tryptophan biosynthesis; L-tryptophan from chorismate: step 2/5. Catalyzes the transfer of the phosphoribosyl group of 5-phosphorylribose-1-pyrophosphate (PRPP) to anthranilate to yield N-(5'-phosphoribosyl)-anthranilate (PRA). The chain is Anthranilate phosphoribosyltransferase from Listeria monocytogenes serotype 4a (strain HCC23).